A 2300-amino-acid polypeptide reads, in one-letter code: Protein hobbit (2300 aa).

A signal peptide spans 1–21 (MMLQLLLFCLALFIFVYWVLP). Residues 23–117 (GISWYLVKRF…LRRTQTLAGK (95 aa)) form a transmembrane domain region. 2 disordered regions span residues 269–290 (TSTGQPSRRSTQGLAPSKRSYD) and 2111–2148 (VSDELDDNASTSSASTTNLQAKSSTSSSTKRSGKGKKG). The span at 270–282 (STGQPSRRSTQGL) shows a compositional bias: polar residues. The tract at residues 1750–2300 (VVSETVGAFL…ASSGKRSGND (551 aa)) is required for endoplasmic reticulum-cell membrane contact sites location and binding to phosphatidylinositols. A compositionally biased stretch (low complexity) spans 2119-2140 (ASTSSASTTNLQAKSSTSSSTK).

The protein resides in the cell membrane. It is found in the endoplasmic reticulum membrane. Its subcellular location is the mitochondrion membrane. Tube-forming lipid transport protein which binds to phosphatidylinositols and affects phosphatidylinositol-4,5-bisphosphate (PtdIns-4,5-P2) distribution. The protein is Protein hobbit of Drosophila melanogaster (Fruit fly).